Here is a 561-residue protein sequence, read N- to C-terminus: Zinc finger protein 37A (561 aa).

The 72-residue stretch at 8 to 79 (VSFRDVTVGF…EEKFPSQSHL (72 aa)) folds into the KRAB domain. A C2H2-type 1; degenerate zinc finger spans residues 146–168 (FEYNECGKAFPENSLFLVHKRGY). A C2H2-type 2; degenerate zinc finger spans residues 243–265 (IEYNECGTFFSEKLVLHLQQRTH). 10 consecutive C2H2-type zinc fingers follow at residues 271 to 293 (YECH…QRTH), 299 to 321 (YECH…QRIH), 327 to 349 (YGCH…QRTH), 355 to 377 (YECH…QKTH), 383 to 405 (YECY…QRIH), 411 to 433 (YECN…LRTH), 439 to 461 (YECI…LRRH), 467 to 489 (FGCN…QRTH), 495 to 517 (YGCN…HRTH), and 523 to 545 (YECN…QRIH).

It belongs to the krueppel C2H2-type zinc-finger protein family.

The protein resides in the nucleus. Functionally, may be involved in transcriptional regulation. The sequence is that of Zinc finger protein 37A (ZNF37A) from Homo sapiens (Human).